Reading from the N-terminus, the 282-residue chain is MGEWDLLGRLLDKVQSHSTVIGKVWLTVLFVFRILVLRTGADRVWGDEQSDFVCNTQQPGCENVCYDLAFPISHVRFWFLQIIAVATPKLLYLGHVLHVIHAEKKMKERMKKQAELDDQTNLFLRKAYKVPKYTKSSGKISIRGRLLRSYVYHLVAKIILEVLFIVGQYFLYGFTLDTRYVCTRFPCPHKVDCFLSRPTEKSVIIWFMLVAAFVSLFLSLVELFYLCVKAAKECMARRQDYTVTPVTPPLLARKSFKSHKEVFQNCVNEPASPENNMEEVHI.

Residues 2-13 (GEWDLLGRLLDK) lie on the Cytoplasmic side of the membrane. A helical membrane pass occupies residues 14–36 (VQSHSTVIGKVWLTVLFVFRILV). Residues 37–76 (LRTGADRVWGDEQSDFVCNTQQPGCENVCYDLAFPISHVR) are Extracellular-facing. Residues 77–99 (FWFLQIIAVATPKLLYLGHVLHV) traverse the membrane as a helical segment. The Cytoplasmic portion of the chain corresponds to 100–148 (IHAEKKMKERMKKQAELDDQTNLFLRKAYKVPKYTKSSGKISIRGRLLR). The chain crosses the membrane as a helical span at residues 149–171 (SYVYHLVAKIILEVLFIVGQYFL). Topologically, residues 172–203 (YGFTLDTRYVCTRFPCPHKVDCFLSRPTEKSV) are extracellular. Residues 204–226 (IIWFMLVAAFVSLFLSLVELFYL) form a helical membrane-spanning segment. Residues 227-282 (CVKAAKECMARRQDYTVTPVTPPLLARKSFKSHKEVFQNCVNEPASPENNMEEVHI) lie on the Cytoplasmic side of the membrane.

Belongs to the connexin family. Alpha-type (group II) subfamily. A connexon is composed of a hexamer of connexins. In terms of tissue distribution, expressed equally in incompetent and competent ovaries.

The protein resides in the cell membrane. Its subcellular location is the cell junction. It is found in the gap junction. In terms of biological role, one gap junction consists of a cluster of closely packed pairs of transmembrane channels, the connexons, through which materials of low MW diffuse from one cell to a neighboring cell. The polypeptide is Gap junction Cx32.7 protein (Micropogonias undulatus (Atlantic croaker)).